We begin with the raw amino-acid sequence, 506 residues long: Maturase K (506 aa).

It belongs to the intron maturase 2 family. MatK subfamily.

The protein resides in the plastid. It is found in the chloroplast. Functionally, usually encoded in the trnK tRNA gene intron. Probably assists in splicing its own and other chloroplast group II introns. The sequence is that of Maturase K from Trifolium lupinaster (Lupine clover).